The chain runs to 111 residues: Probable 4-amino-4-deoxy-L-arabinose-phosphoundecaprenol flippase subunit ArnE (111 aa).

The next 3 membrane-spanning stretches (helical) occupy residues 38–58 (LWLG…LLVL), 61–81 (LPVG…TLAA), and 89–109 (VLPR…ILGS). In terms of domain architecture, EamA spans 40-109 (LGLALICMGA…IISGIIILGS (70 aa)).

It belongs to the ArnE family. As to quaternary structure, heterodimer of ArnE and ArnF.

The protein localises to the cell inner membrane. Its pathway is bacterial outer membrane biogenesis; lipopolysaccharide biosynthesis. In terms of biological role, translocates 4-amino-4-deoxy-L-arabinose-phosphoundecaprenol (alpha-L-Ara4N-phosphoundecaprenol) from the cytoplasmic to the periplasmic side of the inner membrane. This is Probable 4-amino-4-deoxy-L-arabinose-phosphoundecaprenol flippase subunit ArnE from Salmonella paratyphi A (strain ATCC 9150 / SARB42).